The following is a 176-amino-acid chain: Thiol-disulfide oxidoreductase ResA (176 aa).

The chain crosses the membrane as a helical; Signal-anchor for type II membrane protein span at residues 11–30 (LSILAVISVALGYTFYSNFF). In terms of domain architecture, Thioredoxin spans 36–176 (ARAGEQAVNF…EFMELIKPEA (141 aa)). Cysteine 74 and cysteine 77 form a disulfide bridge.

Belongs to the thioredoxin family. ResA subfamily.

Its subcellular location is the cell membrane. The protein operates within protein modification; cytochrome c assembly. Functionally, thiol-disulfide oxidoreductase which is required in disulfide reduction during c-type cytochrome synthesis. May accept reducing equivalents from CcdA, leading to breakage of disulfide bonds in apocytochrome c; following this reduction heme can be covalently attached. This is Thiol-disulfide oxidoreductase ResA from Halalkalibacterium halodurans (strain ATCC BAA-125 / DSM 18197 / FERM 7344 / JCM 9153 / C-125) (Bacillus halodurans).